The following is a 607-amino-acid chain: Glutamyl-tRNA(Gln) amidotransferase subunit E (607 aa).

It belongs to the GatB/GatE family. GatE subfamily. In terms of assembly, heterodimer of GatD and GatE.

It carries out the reaction L-glutamyl-tRNA(Gln) + L-glutamine + ATP + H2O = L-glutaminyl-tRNA(Gln) + L-glutamate + ADP + phosphate + H(+). Allows the formation of correctly charged Gln-tRNA(Gln) through the transamidation of misacylated Glu-tRNA(Gln) in organisms which lack glutaminyl-tRNA synthetase. The reaction takes place in the presence of glutamine and ATP through an activated gamma-phospho-Glu-tRNA(Gln). The GatDE system is specific for glutamate and does not act on aspartate. The chain is Glutamyl-tRNA(Gln) amidotransferase subunit E from Pyrobaculum islandicum (strain DSM 4184 / JCM 9189 / GEO3).